Reading from the N-terminus, the 307-residue chain is Elongation factor Ts (307 aa).

Residues 80 to 83 (TDFV) are involved in Mg(2+) ion dislocation from EF-Tu.

Belongs to the EF-Ts family.

Its subcellular location is the cytoplasm. Its function is as follows. Associates with the EF-Tu.GDP complex and induces the exchange of GDP to GTP. It remains bound to the aminoacyl-tRNA.EF-Tu.GTP complex up to the GTP hydrolysis stage on the ribosome. The polypeptide is Elongation factor Ts (Nitrobacter hamburgensis (strain DSM 10229 / NCIMB 13809 / X14)).